We begin with the raw amino-acid sequence, 74 residues long: Large ribosomal subunit protein bL31 (74 aa).

Zn(2+) is bound by residues C16, C18, C38, and C41.

It belongs to the bacterial ribosomal protein bL31 family. Type A subfamily. In terms of assembly, part of the 50S ribosomal subunit. It depends on Zn(2+) as a cofactor.

Functionally, binds the 23S rRNA. The sequence is that of Large ribosomal subunit protein bL31 from Mycolicibacterium vanbaalenii (strain DSM 7251 / JCM 13017 / BCRC 16820 / KCTC 9966 / NRRL B-24157 / PYR-1) (Mycobacterium vanbaalenii).